The following is a 318-amino-acid chain: dTDP-6-deoxy-L-talose 4-dehydrogenase (NAD(P)(+)) (318 aa).

NAD(+) contacts are provided by residues 19 to 20 (FI), 60 to 61 (DP), Asn-95, Thr-120, Tyr-145, and Lys-149. Residues Thr-120 and Tyr-145 each coordinate substrate. The active-site Proton acceptor is Tyr-145.

This sequence belongs to the NAD(P)-dependent epimerase/dehydratase family.

It carries out the reaction dTDP-6-deoxy-beta-L-talose + NAD(+) = dTDP-4-dehydro-beta-L-rhamnose + NADH + H(+). The catalysed reaction is dTDP-6-deoxy-beta-L-talose + NADP(+) = dTDP-4-dehydro-beta-L-rhamnose + NADPH + H(+). Functionally, catalyzes the reduction of dTDP-6-deoxy-L-lyxo-4-hexulose to dTDP-6-deoxy-L-talose. Can use NAD(+) or NADP(+). The protein is dTDP-6-deoxy-L-talose 4-dehydrogenase (NAD(P)(+)) (tal) of Kitasatospora kifunensis (Streptomyces kifunensis).